Here is a 453-residue protein sequence, read N- to C-terminus: Exodeoxyribonuclease 7 large subunit (453 aa).

This sequence belongs to the XseA family. In terms of assembly, heterooligomer composed of large and small subunits.

The protein localises to the cytoplasm. It catalyses the reaction Exonucleolytic cleavage in either 5'- to 3'- or 3'- to 5'-direction to yield nucleoside 5'-phosphates.. Bidirectionally degrades single-stranded DNA into large acid-insoluble oligonucleotides, which are then degraded further into small acid-soluble oligonucleotides. The protein is Exodeoxyribonuclease 7 large subunit of Rickettsia typhi (strain ATCC VR-144 / Wilmington).